Here is a 245-residue protein sequence, read N- to C-terminus: Galectin-3 (245 aa).

The segment at 1-30 is disordered; the sequence is MADGFSLNDALAGSGNPNPQGWPGAWGNQP. A2 is subject to N-acetylalanine. S6 is modified (phosphoserine; by CK1). Tandem repeats lie at residues 35-43, 44-52, 53-61, and 62-70. Residues 35-99 form a 7 X 9 AA tandem repeats of Y-P-G-X(3)-P-[GS]-A region; it reads YPGASYPGAY…PSAPGAYPAA (65 aa). Residues 47–68 are disordered; the sequence is QAPPGAYPGQAPPGAYPGPTAP. A 5; approximate repeat occupies 71–78; that stretch reads YPGPAPGA. A 6; approximate repeat occupies 79 to 88; the sequence is YPGQPGASGA. One copy of the 7; approximate repeat lies at 89 to 99; sequence YPSAPGAYPAA. One can recognise a Galectin domain in the interval 113-243; it reads YKLPLAGGVM…DITLTSAAPT (131 aa). Position 176 to 182 (176 to 182) interacts with a beta-D-galactoside; it reads WGREERQ. A Phosphoserine modification is found at S183. The Nuclear export signal signature appears at 221–236; that stretch reads KNLREINQMEISGDIT.

In terms of assembly, probably forms homo- or heterodimers. Interacts with DMBT1. Interacts with CD6 and ALCAM. Forms a complex with the ITGA3, ITGB1 and CSPG4. Interacts with LGALS3BP, LYPD3, ZFTRAF1 and UACA. Interacts with TRIM16; this interaction mediates autophagy of damage endomembranes. Interacts with cargo receptor TMED10; the interaction mediates the translocation from the cytoplasm into the ERGIC (endoplasmic reticulum-Golgi intermediate compartment) and thereby secretion. Interacts with and inhibits by binding NCR3/NKp30.

It is found in the cytoplasm. It localises to the nucleus. Its subcellular location is the secreted. Its function is as follows. Galactose-specific lectin which binds IgE. May mediate with the alpha-3, beta-1 integrin the stimulation by CSPG4 of endothelial cells migration. Together with DMBT1, required for terminal differentiation of columnar epithelial cells during early embryogenesis. In the nucleus: acts as a pre-mRNA splicing factor. Involved in acute inflammatory responses including neutrophil activation and adhesion, chemoattraction of monocytes macrophages, opsonization of apoptotic neutrophils, and activation of mast cells. Together with TRIM16, coordinates the recognition of membrane damage with mobilization of the core autophagy regulators ATG16L1 and BECN1 in response to damaged endomembranes. When secreted, interacts with NK cell-activating receptor NCR3/NKp30 acting as an inhibitory ligand which antagonizes NK cell attack. This Cricetulus longicaudatus (Long-tailed dwarf hamster) protein is Galectin-3 (LGALS3).